A 227-amino-acid chain; its full sequence is Glutathione S-transferase U7 (227 aa).

Residues 8 to 87 (EEVKLLGMWA…YIDETWRDNP (80 aa)) enclose the GST N-terminal domain. Residues 18-19 (SP), 44-45 (NK), 58-59 (MI), and 71-72 (ES) contribute to the glutathione site. Positions 92–215 (DPYERTMARF…PPEDEHLKYI (124 aa)) constitute a GST C-terminal domain.

It belongs to the GST superfamily. Tau family.

It localises to the cytoplasm. The protein resides in the cytosol. The enzyme catalyses RX + glutathione = an S-substituted glutathione + a halide anion + H(+). Functionally, may be involved in the conjugation of reduced glutathione to a wide number of exogenous and endogenous hydrophobic electrophiles and have a detoxification role against certain herbicides. The protein is Glutathione S-transferase U7 (GSTU7) of Arabidopsis thaliana (Mouse-ear cress).